Reading from the N-terminus, the 690-residue chain is MQPLLLEIGSEEIPAGYIVPALEALAQALDAKLESARIAHSKPKVYGTPRRLAVILDEVAEKQESVTTEMVGPPKSVAFDGEGKPKVPAVKFAEKAGVAVEELTFQETEKGVYLCAKIQDEGKETLGILQEMLPEIISHIPFPKSMRWAALPGTFARPVFSILALLGDQVIPFEWNGVTTGRQTRGHYFMAPEAIDIQTPSEYVNALEKAKVIADIPTRRKMVKEGVDAIAKELGGDAIEDEELVDIVANLVEFPAPVGGKFETGFLEVPDKVLITAMREHQKYFAIQDKDGKLMPCFVAVNNTQCKDPQLVATGHERVLRARLSDAKFFWDVDKKQSMEDWVKRLDRVLFQKKLGSVGEKVARVEEMAKFLAAAPEINGDPDKAQKAAHFCKADLVSGLVIEFTKLQGVMGKAYASLAGMDAETASALEEHYLPAYSGGPLPRTKTGDAVAMADKMDSLCGCFAVGLIPSGNRDPYALRRQGIGVIRILQEKGYSLSLSAIVDKGLTLVKDKADQNLAETRDKIISFLADRMAHMLAEQGFSKDVIQAAVAISCDDIPYLWKRVAAVEKLKTLPDYEALAQTFKRVANIIKQAAEKGTLSDQEVNPALFEKDCEKDLLEAFTAMEAKVSGLGVDEALLEVAKLRPAVDAFFDDVMVMAEDMKVRENRLALLAGIAGLFGRFADFSRISA.

Belongs to the class-II aminoacyl-tRNA synthetase family. As to quaternary structure, tetramer of two alpha and two beta subunits.

It localises to the cytoplasm. The enzyme catalyses tRNA(Gly) + glycine + ATP = glycyl-tRNA(Gly) + AMP + diphosphate. The polypeptide is Glycine--tRNA ligase beta subunit (Desulfatibacillum aliphaticivorans).